The primary structure comprises 222 residues: Charged multivesicular body protein 3 (222 aa).

A lipid anchor (N-myristoyl glycine) is attached at G2. Residues 2–113 (GLFGKTQEKP…LQKSTEVMKA (112 aa)) are intramolecular interaction with C-terminus. Residues 22-54 (KIRKEMRVVDRQIRDIQREEEKVKRSVKDAAKK) are a coiled coil. 2 important for autoinhibitory function regions span residues 59 to 64 (VCVVLA) and 168 to 169 (IL). Positions 141-222 (EEMLEDTFES…MQSRLATLRS (82 aa)) form a coiled coil. The segment at 151–220 (MDDQEEMEEE…EAMQSRLATL (70 aa)) is intramolecular interaction with N-terminus. Residues 151–222 (MDDQEEMEEE…MQSRLATLRS (72 aa)) are interaction with VPS4A. A Glycyl lysine isopeptide (Lys-Gly) (interchain with G-Cter in ubiquitin) cross-link involves residue K179. The tract at residues 180-222 (APSKVTDALPEPEPSGAMAASEDEEEEEEALEAMQSRLATLRS) is disordered. 3 interaction with STAMBP regions span residues 196 to 222 (AMAASEDEEEEEEALEAMQSRLATLRS), 203 to 207 (EEEEE), and 221 to 222 (RS). S200 is modified (phosphoserine). The span at 200–210 (SEDEEEEEEAL) shows a compositional bias: acidic residues. Residues 201-211 (EDEEEEEEALE) carry the MIT-interacting motif motif.

Belongs to the SNF7 family. Probable core component of the endosomal sorting required for transport complex III (ESCRT-III). ESCRT-III components are thought to multimerize to form a flat lattice on the perimeter membrane of the endosome. Several assembly forms of ESCRT-III may exist that interact and act sequentially. Forms a metastable monomer in solution; its core structure (without part of the putative autoinhibitory C-terminal acidic region) oligomerizes into a flat lattice via two different dimerization interfaces. In vitro, heteromerizes with CHMP2A (but not CHMP4) to form helical tubular structures that expose membrane-interacting sites on the outside whereas VPS4B can associate on the inside of the tubule. May interact with IGFBP7; the relevance of such interaction however remains unclear. Interacts with CHMP2A. Interacts with CHMP4A; the interaction requires the release of CHMP4A autoinhibition. Interacts with VPS4A. Interacts with STAMBP; the interaction appears to relieve the autoinhibition of CHMP3. Interacts with VTA1.

It is found in the cytoplasm. The protein localises to the cytosol. It localises to the membrane. Its subcellular location is the endosome. The protein resides in the late endosome membrane. Functionally, probable core component of the endosomal sorting required for transport complex III (ESCRT-III) which is involved in multivesicular bodies (MVBs) formation and sorting of endosomal cargo proteins into MVBs. MVBs contain intraluminal vesicles (ILVs) that are generated by invagination and scission from the limiting membrane of the endosome and mostly are delivered to lysosomes enabling degradation of membrane proteins, such as stimulated growth factor receptors, lysosomal enzymes and lipids. The MVB pathway appears to require the sequential function of ESCRT-O, -I,-II and -III complexes. ESCRT-III proteins mostly dissociate from the invaginating membrane before the ILV is released. The ESCRT machinery also functions in topologically equivalent membrane fission events, such as the terminal stages of cytokinesis and the budding of enveloped viruses (lentiviruses). ESCRT-III proteins are believed to mediate the necessary vesicle extrusion and/or membrane fission activities, possibly in conjunction with the AAA ATPase VPS4. Selectively binds to phosphatidylinositol 3,5-bisphosphate PtdIns(3,5)P2 and PtdIns(3,4)P2 in preference to other phosphoinositides tested. Involved in late stages of cytokinesis. Plays a role in endosomal sorting/trafficking of EGF receptor. This Pongo abelii (Sumatran orangutan) protein is Charged multivesicular body protein 3 (CHMP3).